The chain runs to 101 residues: A-type ATP synthase subunit F (101 aa).

It belongs to the V-ATPase F subunit family. In terms of assembly, has multiple subunits, A(3), B(3), C, D, E, F, G, I and K(x); there may be a few other subunits as well.

The protein resides in the cell membrane. Component of the A-type ATP synthase that produces ATP from ADP in the presence of a proton gradient across the membrane. The sequence is that of A-type ATP synthase subunit F from Methanosarcina mazei (strain ATCC BAA-159 / DSM 3647 / Goe1 / Go1 / JCM 11833 / OCM 88) (Methanosarcina frisia).